A 244-amino-acid chain; its full sequence is DNA repair protein RecO (244 aa).

The protein belongs to the RecO family.

In terms of biological role, involved in DNA repair and RecF pathway recombination. In Ehrlichia chaffeensis (strain ATCC CRL-10679 / Arkansas), this protein is DNA repair protein RecO.